The chain runs to 142 residues: Nucleoside diphosphate kinase (142 aa).

Residues Lys-11, Phe-59, Arg-87, Thr-93, Arg-104, and Asn-114 each coordinate ATP. His-117 functions as the Pros-phosphohistidine intermediate in the catalytic mechanism.

It belongs to the NDK family. As to quaternary structure, homotetramer. The cofactor is Mg(2+).

It is found in the cytoplasm. The catalysed reaction is a 2'-deoxyribonucleoside 5'-diphosphate + ATP = a 2'-deoxyribonucleoside 5'-triphosphate + ADP. It catalyses the reaction a ribonucleoside 5'-diphosphate + ATP = a ribonucleoside 5'-triphosphate + ADP. In terms of biological role, major role in the synthesis of nucleoside triphosphates other than ATP. The ATP gamma phosphate is transferred to the NDP beta phosphate via a ping-pong mechanism, using a phosphorylated active-site intermediate. The chain is Nucleoside diphosphate kinase from Marinobacter nauticus (strain ATCC 700491 / DSM 11845 / VT8) (Marinobacter aquaeolei).